A 477-amino-acid polypeptide reads, in one-letter code: Probable glycine dehydrogenase (decarboxylating) subunit 2 (477 aa).

Lys264 is modified (N6-(pyridoxal phosphate)lysine).

Belongs to the GcvP family. C-terminal subunit subfamily. In terms of assembly, the glycine cleavage system is composed of four proteins: P, T, L and H. In this organism, the P 'protein' is a heterodimer of two subunits. It depends on pyridoxal 5'-phosphate as a cofactor.

It carries out the reaction N(6)-[(R)-lipoyl]-L-lysyl-[glycine-cleavage complex H protein] + glycine + H(+) = N(6)-[(R)-S(8)-aminomethyldihydrolipoyl]-L-lysyl-[glycine-cleavage complex H protein] + CO2. Its function is as follows. The glycine cleavage system catalyzes the degradation of glycine. The P protein binds the alpha-amino group of glycine through its pyridoxal phosphate cofactor; CO(2) is released and the remaining methylamine moiety is then transferred to the lipoamide cofactor of the H protein. The protein is Probable glycine dehydrogenase (decarboxylating) subunit 2 of Fervidobacterium nodosum (strain ATCC 35602 / DSM 5306 / Rt17-B1).